The chain runs to 117 residues: Photosystem II reaction center Psb28 protein (117 aa).

Belongs to the Psb28 family. In terms of assembly, part of the photosystem II complex.

It is found in the cellular thylakoid membrane. The polypeptide is Photosystem II reaction center Psb28 protein (Prochlorococcus marinus (strain MIT 9515)).